The chain runs to 1384 residues: Protein Gawky (1384 aa).

Disordered regions lie at residues 1–99 (MREA…VWTG), 148–227 (NGSS…DPRG), 263–335 (TAST…DDGT), and 447–501 (VGAP…SGWS). Residues 1–205 (MREALFSQDG…HRGGNGSGAT (205 aa)) form a required for interaction with AGO1 region. Sufficient for miRNA-mediated silencing stretches follow at residues 1 to 605 (MREA…SLGS) and 605 to 830 (SYAD…SVHL). Over residues 15 to 24 (HVNQDTNWEV) the composition is skewed to polar residues. The segment covering 150-171 (SSNITGSSGVATGSSGNSSNAG) has biased composition (low complexity). Residues 205–490 (TSSDPRDIRM…GVSWGNKQSK (286 aa)) are minimal N-terminal region required for miRNA-mediated silencing. Residues 208-225 (DPRDIRMIDPRDPIRGDP) are compositionally biased toward basic and acidic residues. Composition is skewed to polar residues over residues 449 to 475 (APSSGSVSSNNWVDDKSNSTLAQNSWS) and 485 to 501 (GNKQSKPPSNSASSGWS). The 42-residue stretch at 547-588 (IIKQSKQYRILVENGFKKEDVERALVIANMNIEEAADMLRAN) folds into the UBA domain. Disordered stretches follow at residues 607 to 626 (ADHNSSTSSGGFAGRYPVNS), 809 to 841 (QNMQPTSQQQQPQQQQLPSVHLSNSGNDYLRGH), 889 to 942 (TEFS…NKDW), 962 to 1022 (EPGK…LSSS), 1052 to 1102 (TSPL…GVQT), 1188 to 1221 (SENEVQSIMQHLPQTPSSTSSSGTSGGNVGGVGT), and 1318 to 1368 (GTAN…PSGR). The span at 809–826 (QNMQPTSQQQQPQQQQLP) shows a compositional bias: low complexity. Positions 862–1115 (YQGASNQQSR…NWTGGNTTWG (254 aa)) are not required for interaction with AGO1 or miRNAs or for localization to P-bodies but necessary for miRNA-mediated silencing and for interaction with pAbp. Polar residues predominate over residues 898-924 (TKQNLTANTSNINSLGLQNDSTWSTGR). The sufficient for miRNA-mediated silencing stretch occupies residues 940-1215 (KDWSVAQPTS…TSSSGTSGGN (276 aa)). The span at 1010-1022 (SPTDLPPLSLSSS) shows a compositional bias: low complexity. Over residues 1052 to 1061 (TSPLNKSSSR) the composition is skewed to polar residues. Over residues 1068 to 1084 (TANSNKSANSNASTPTT) the composition is skewed to low complexity. Positions 1117–1189 (SWLLLKNLTA…TTIFAESPSE (73 aa)) constitute an RRM domain. Residues 1188-1203 (SENEVQSIMQHLPQTP) are compositionally biased toward polar residues. The not required for interaction with AGO1 or miRNAs or for localization to P-bodies but necessary for miRNA-mediated silencing, dissociation from AGO1 and miRNAs and interaction with pAbp stretch occupies residues 1200–1384 (PQTPSSTSSS…ISLVYSIVDD (185 aa)). A compositionally biased stretch (gly residues) spans 1211-1220 (TSGGNVGGVG). The segment covering 1318–1349 (GTANSSGSKSSANNLASGQSSASNLTNSTNST) has biased composition (low complexity). Residues 1350 to 1365 (WRQTSQNQALQSQSRP) show a composition bias toward polar residues.

The protein belongs to the GW182 family. As to quaternary structure, component of the miRNA-directed RNA-induced silencing complex (miRISC), composed of at least AGO1 and gw, which bind mature miRNAs and targets the selective destruction of homologous RNAs. Interacts (via N-terminal region) with AGO1 (via Piwi domain); the interaction is essential for localization of AGO1 in P-bodies and for miRNA-mediated silencing. Interacts with pAbp/PABPC1; this interaction interferes with the binding of pAbp to eIF4G and is required for miRNA-mediated silencing. Interacts with CCR4-NOT complex members Not1, Rga/NOT2, twin/CCR4, Pop2 and NOT3/5 and with PAN complex members CG8232/PAN2 and CG11486/PAN3.

It is found in the cytoplasm. The protein localises to the P-body. Its function is as follows. Required for gene silencing mediated by micro-RNAs (miRNAs). Silences both polyadenylated and deadenylated mRNAs. Required for miRNA-mediated translational repression and mRNA decay. Not required for miRNA target recognition. Necessary to initiate but not to maintain silencing. Promotes mRNA deadenylation through the recruitment of the CCR4-NOT and PAN complexes and promotes decapping by the DCP1-DCP2 complex. Dissociates from silenced mRNAs after deadenylation. Required for completion of nuclear divisions during early embryonic development. The polypeptide is Protein Gawky (Drosophila melanogaster (Fruit fly)).